The following is a 1995-amino-acid chain: uncharacterized protein (1995 aa).

7 helical membrane-spanning segments follow: residues 31–51, 53–73, 106–126, 157–177, 212–232, 254–274, and 307–327; these read NYTE…EFFK, FFSF…PDIA, LVIF…ILPT, FLWL…WLSL, IFLL…PFIS, FLLI…SLLQ, and ILNF…IPYY. 2 disordered regions span residues 1418 to 1441 and 1848 to 1883; these read SLKK…HQFS and DLRW…KTNP. Composition is skewed to basic residues over residues 1422–1441 and 1853–1863; these read SQIK…HQFS and PSSRTKQKRKD.

It belongs to the ycf78 family.

It is found in the plastid. Its subcellular location is the chloroplast membrane. Its function is as follows. Essential for cell growth. May be involved in binding chloroplast DNA to either the chloroplast envelope or the thylakoid membrane. This is an uncharacterized protein from Chlamydomonas reinhardtii (Chlamydomonas smithii).